A 132-amino-acid chain; its full sequence is D-ribose pyranase (132 aa).

H20 (proton donor) is an active-site residue. Residues D28, H98, and 121–123 (YSN) each bind substrate.

Belongs to the RbsD / FucU family. RbsD subfamily. In terms of assembly, homodecamer.

The protein localises to the cytoplasm. The enzyme catalyses beta-D-ribopyranose = beta-D-ribofuranose. It functions in the pathway carbohydrate metabolism; D-ribose degradation; D-ribose 5-phosphate from beta-D-ribopyranose: step 1/2. Its function is as follows. Catalyzes the interconversion of beta-pyran and beta-furan forms of D-ribose. The polypeptide is D-ribose pyranase (Kosmotoga olearia (strain ATCC BAA-1733 / DSM 21960 / TBF 19.5.1)).